Reading from the N-terminus, the 157-residue chain is uncharacterized protein (157 aa).

It belongs to the mimivirus L242/L243 family.

This is an uncharacterized protein from Acanthamoeba polyphaga (Amoeba).